Consider the following 202-residue polypeptide: FMN-dependent NADH:quinone oxidoreductase 2 (202 aa).

FMN-binding positions include Ser9, 15–17, 93–96, and 137–140; these read SVS, MYNF, and SRGG.

The protein belongs to the azoreductase type 1 family. Homodimer. The cofactor is FMN.

It carries out the reaction 2 a quinone + NADH + H(+) = 2 a 1,4-benzosemiquinone + NAD(+). The catalysed reaction is N,N-dimethyl-1,4-phenylenediamine + anthranilate + 2 NAD(+) = 2-(4-dimethylaminophenyl)diazenylbenzoate + 2 NADH + 2 H(+). In terms of biological role, quinone reductase that provides resistance to thiol-specific stress caused by electrophilic quinones. Also exhibits azoreductase activity. Catalyzes the reductive cleavage of the azo bond in aromatic azo compounds to the corresponding amines. The polypeptide is FMN-dependent NADH:quinone oxidoreductase 2 (Bradyrhizobium diazoefficiens (strain JCM 10833 / BCRC 13528 / IAM 13628 / NBRC 14792 / USDA 110)).